The primary structure comprises 285 residues: 4-diphosphocytidyl-2-C-methyl-D-erythritol kinase (285 aa).

The active site involves lysine 10. An ATP-binding site is contributed by 94–104 (PVAAGLGGGSS). Aspartate 136 is a catalytic residue.

Belongs to the GHMP kinase family. IspE subfamily.

It catalyses the reaction 4-CDP-2-C-methyl-D-erythritol + ATP = 4-CDP-2-C-methyl-D-erythritol 2-phosphate + ADP + H(+). It functions in the pathway isoprenoid biosynthesis; isopentenyl diphosphate biosynthesis via DXP pathway; isopentenyl diphosphate from 1-deoxy-D-xylulose 5-phosphate: step 3/6. Functionally, catalyzes the phosphorylation of the position 2 hydroxy group of 4-diphosphocytidyl-2C-methyl-D-erythritol. The polypeptide is 4-diphosphocytidyl-2-C-methyl-D-erythritol kinase (Latilactobacillus sakei subsp. sakei (strain 23K) (Lactobacillus sakei subsp. sakei)).